A 307-amino-acid polypeptide reads, in one-letter code: Nucleotide-binding protein AAur_2084 (307 aa).

The segment at 1-21 (MDEATAKSGTEQDGLTPVKPP) is disordered. 30–37 (GMSGAGRS) is an ATP binding site. 81–84 (DVRS) contacts GTP.

This sequence belongs to the RapZ-like family.

In terms of biological role, displays ATPase and GTPase activities. The sequence is that of Nucleotide-binding protein AAur_2084 from Paenarthrobacter aurescens (strain TC1).